The chain runs to 526 residues: Butyrophilin subfamily 1 member A1 (526 aa).

The first 26 residues, 1–26, serve as a signal peptide directing secretion; that stretch reads MAVFPNSCLAGCLLIFILLQLPKLDS. Ig-like V-type domains lie at 27 to 140 and 148 to 234; these read APFD…VHLK and PHIS…VEVS. The Extracellular portion of the chain corresponds to 27–242; sequence APFDVIGPQE…VSIPASFFPR (216 aa). 2 disulfides stabilise this stretch: cysteine 50–cysteine 124 and cysteine 164–cysteine 218. A glycan (N-linked (GlcNAc...) (complex) asparagine) is linked at asparagine 55. N-linked (GlcNAc...) (hybrid) asparagine glycosylation occurs at asparagine 215. The helical transmembrane segment at 243–269 threads the bilayer; that stretch reads LTPWMVAVAVILVVLGLLTIGSIFFTW. Over 270-526 the chain is Cytoplasmic; sequence RLYKERSRQR…IPLQPSQGVP (257 aa). One can recognise a B30.2/SPRY domain in the interval 285–479; it reads SKEKLLEELK…LTICPVTDGL (195 aa).

The protein belongs to the immunoglobulin superfamily. BTN/MOG family. As to quaternary structure, seems to associate with xanthine dehydrogenase/oxidase. Expressed in mammary tissue.

It localises to the membrane. Functionally, may function in the secretion of milk-fat droplets. May act as a specific membrane-associated receptor for the association of cytoplasmic droplets with the apical plasma membrane. Inhibits the proliferation of CD4 and CD8 T-cells activated by anti-CD3 antibodies, T-cell metabolism and IL2 and IFNG secretion. This chain is Butyrophilin subfamily 1 member A1 (BTN1A1), found in Bos taurus (Bovine).